The chain runs to 352 residues: Chorismate synthase (352 aa).

An NADP(+)-binding site is contributed by Arg48. FMN is bound by residues Arg125–Ser127, Asn237–Ala238, Gly278, Lys293–Ser297, and Arg319.

This sequence belongs to the chorismate synthase family. As to quaternary structure, homotetramer. It depends on FMNH2 as a cofactor.

It catalyses the reaction 5-O-(1-carboxyvinyl)-3-phosphoshikimate = chorismate + phosphate. It functions in the pathway metabolic intermediate biosynthesis; chorismate biosynthesis; chorismate from D-erythrose 4-phosphate and phosphoenolpyruvate: step 7/7. Its function is as follows. Catalyzes the anti-1,4-elimination of the C-3 phosphate and the C-6 proR hydrogen from 5-enolpyruvylshikimate-3-phosphate (EPSP) to yield chorismate, which is the branch point compound that serves as the starting substrate for the three terminal pathways of aromatic amino acid biosynthesis. This reaction introduces a second double bond into the aromatic ring system. The sequence is that of Chorismate synthase from Francisella tularensis subsp. holarctica (strain FTNF002-00 / FTA).